The following is a 287-amino-acid chain: ATP synthase subunit a (287 aa).

6 helical membrane-spanning segments follow: residues 37–57, 96–116, 144–164, 187–207, 224–244, and 266–286; these read LDSVAVSVILGVLGLFVMWLA, FIAPLALTVFVWIFLMNAMDL, DLSTTLGLSSAVLILCFVYSI, PVFALILGVVNLLMQIIEYVA, ELVFMLIALMGGAAAMSLSGV, and TLQAFIFMMLTLIYLGQAHEA.

It belongs to the ATPase A chain family. F-type ATPases have 2 components, CF(1) - the catalytic core - and CF(0) - the membrane proton channel. CF(1) has five subunits: alpha(3), beta(3), gamma(1), delta(1), epsilon(1). CF(0) has three main subunits: a(1), b(2) and c(9-12). The alpha and beta chains form an alternating ring which encloses part of the gamma chain. CF(1) is attached to CF(0) by a central stalk formed by the gamma and epsilon chains, while a peripheral stalk is formed by the delta and b chains.

It is found in the cell inner membrane. Key component of the proton channel; it plays a direct role in the translocation of protons across the membrane. The protein is ATP synthase subunit a of Acidovorax ebreus (strain TPSY) (Diaphorobacter sp. (strain TPSY)).